Here is a 1065-residue protein sequence, read N- to C-terminus: Probable importin-7 homolog (1065 aa).

One can recognise an Importin N-terminal domain in the interval 25–98 (AEAQLQQIKV…KENLIDLLVH (74 aa)). The segment at 958–996 (ENGGDLGEDEGDNFDDQNDDDDQDSEEDLFEDEDTPDFE) is disordered. Over residues 963–996 (LGEDEGDNFDDQNDDDDQDSEEDLFEDEDTPDFE) the composition is skewed to acidic residues.

Belongs to the importin beta family.

It is found in the cytoplasm. Its subcellular location is the nucleus. In terms of biological role, may function in nuclear protein import. The sequence is that of Probable importin-7 homolog from Dictyostelium discoideum (Social amoeba).